The sequence spans 82 residues: MGGISIWQLLIIAVIIVLLFGTKKLRGVGSDLGSAVKGFKKAISEDEPAKEAKKDADFVPQNLEKKEAETVEKQKQNDKEQA.

Residues 1 to 21 (MGGISIWQLLIIAVIIVLLFG) form a helical membrane-spanning segment. The tract at residues 48 to 82 (PAKEAKKDADFVPQNLEKKEAETVEKQKQNDKEQA) is disordered.

The protein belongs to the TatA/E family. The Tat system comprises two distinct complexes: a TatABC complex, containing multiple copies of TatA, TatB and TatC subunits, and a separate TatA complex, containing only TatA subunits. Substrates initially bind to the TatABC complex, which probably triggers association of the separate TatA complex to form the active translocon.

Its subcellular location is the cell inner membrane. Part of the twin-arginine translocation (Tat) system that transports large folded proteins containing a characteristic twin-arginine motif in their signal peptide across membranes. TatA could form the protein-conducting channel of the Tat system. The polypeptide is Sec-independent protein translocase protein TatA (Aliivibrio fischeri (strain ATCC 700601 / ES114) (Vibrio fischeri)).